We begin with the raw amino-acid sequence, 490 residues long: Protein twist (490 aa).

Disordered stretches follow at residues glutamine 48–glutamine 72, proline 96–serine 165, and glutamine 244–methionine 264. Over residues glutamine 54–glutamine 68 the composition is skewed to basic residues. Composition is skewed to low complexity over residues serine 102–glycine 134 and glutamine 244–glutamine 263. Residues serine 325 and serine 328 each carry the phosphoserine modification. The disordered stretch occupies residues leucine 330–serine 361. Positions alanine 339–proline 351 are enriched in basic residues. In terms of domain architecture, bHLH spans asparagine 362–leucine 413.

Efficient DNA binding requires dimerization with another bHLH protein. Homodimer. Interacts with akirin. In terms of tissue distribution, expressed in embryonic abdomen; a single cell ventrally, pairs of cells laterally and three cells dorsally in each hemisegment. In the thorax, there are patches of cells associated with the imaginal disks. During larval development, cells proliferate and, in the abdomen, they form ventral, lateral and dorsal clusters, which are the precursors of the adult abdominal muscles. In the thorax, they form populations of cells in the imaginal disks that correspond to the adepithelial cells.

The protein localises to the nucleus. In terms of biological role, involved in the establishment and dorsoventral patterning of germ layers in the embryo. In Drosophila melanogaster (Fruit fly), this protein is Protein twist (twi).